Reading from the N-terminus, the 128-residue chain is Small ribosomal subunit protein uS9 (128 aa).

Part of the 30S ribosomal subunit. Contacts proteins S7 and S10.

In terms of biological role, part of the top of the head of the 30S subunit. The C-terminal region penetrates the head emerging in the P-site where it contacts tRNA. The chain is Small ribosomal subunit protein uS9 (rpsI) from Thermus thermophilus (strain ATCC 27634 / DSM 579 / HB8).